Reading from the N-terminus, the 142-residue chain is Large ribosomal subunit protein uL13 (142 aa).

This sequence belongs to the universal ribosomal protein uL13 family. In terms of assembly, part of the 50S ribosomal subunit.

Its function is as follows. This protein is one of the early assembly proteins of the 50S ribosomal subunit, although it is not seen to bind rRNA by itself. It is important during the early stages of 50S assembly. In Aeromonas hydrophila subsp. hydrophila (strain ATCC 7966 / DSM 30187 / BCRC 13018 / CCUG 14551 / JCM 1027 / KCTC 2358 / NCIMB 9240 / NCTC 8049), this protein is Large ribosomal subunit protein uL13.